Here is a 234-residue protein sequence, read N- to C-terminus: Orotidine 5'-phosphate decarboxylase (234 aa).

Residues D17, K38, 65-74, T122, R184, Q193, G213, and R214 contribute to the substrate site; that span reads DLKLHDIPNT. The Proton donor role is filled by K67.

This sequence belongs to the OMP decarboxylase family. Type 1 subfamily. Homodimer.

It carries out the reaction orotidine 5'-phosphate + H(+) = UMP + CO2. It functions in the pathway pyrimidine metabolism; UMP biosynthesis via de novo pathway; UMP from orotate: step 2/2. Functionally, catalyzes the decarboxylation of orotidine 5'-monophosphate (OMP) to uridine 5'-monophosphate (UMP). The protein is Orotidine 5'-phosphate decarboxylase of Thermosynechococcus vestitus (strain NIES-2133 / IAM M-273 / BP-1).